A 294-amino-acid polypeptide reads, in one-letter code: Bifunctional protein FolD (294 aa).

NADP(+) is bound by residues 166–168 (GRS), S195, and I236.

Belongs to the tetrahydrofolate dehydrogenase/cyclohydrolase family. In terms of assembly, homodimer.

It carries out the reaction (6R)-5,10-methylene-5,6,7,8-tetrahydrofolate + NADP(+) = (6R)-5,10-methenyltetrahydrofolate + NADPH. The catalysed reaction is (6R)-5,10-methenyltetrahydrofolate + H2O = (6R)-10-formyltetrahydrofolate + H(+). It functions in the pathway one-carbon metabolism; tetrahydrofolate interconversion. Functionally, catalyzes the oxidation of 5,10-methylenetetrahydrofolate to 5,10-methenyltetrahydrofolate and then the hydrolysis of 5,10-methenyltetrahydrofolate to 10-formyltetrahydrofolate. The sequence is that of Bifunctional protein FolD from Chloroherpeton thalassium (strain ATCC 35110 / GB-78).